The following is a 407-amino-acid chain: Probable acyl-CoA dehydrogenase FadE2 (407 aa).

The protein belongs to the acyl-CoA dehydrogenase family. Requires FAD as cofactor.

The catalysed reaction is a 2,3-saturated acyl-CoA + A = a 2,3-dehydroacyl-CoA + AH2. The sequence is that of Probable acyl-CoA dehydrogenase FadE2 from Mycobacterium tuberculosis (strain ATCC 25618 / H37Rv).